The primary structure comprises 121 residues: Nitrogenase-stabilizing/protective protein NifW (121 aa).

This sequence belongs to the NifW family. Homotrimer; associates with NifD.

In terms of biological role, may protect the nitrogenase Fe-Mo protein from oxidative damage. This chain is Nitrogenase-stabilizing/protective protein NifW, found in Methylacidiphilum infernorum (isolate V4) (Methylokorus infernorum (strain V4)).